Consider the following 246-residue polypeptide: uncharacterized protein (246 aa).

At Ser-194 the chain carries Phosphoserine.

This is an uncharacterized protein from Schizosaccharomyces pombe (strain 972 / ATCC 24843) (Fission yeast).